Here is a 150-residue protein sequence, read N- to C-terminus: Transcriptional repressor NrdR (150 aa).

A zinc finger lies at 3 to 33; the sequence is CPYCTGESAVIDTRELDNGETIRRRRRCKHC. The region spanning 48 to 138 is the ATP-cone domain; that stretch reads VMVVKKNGDR…VYRSFSDLGK (91 aa).

The protein belongs to the NrdR family. It depends on Zn(2+) as a cofactor.

Its function is as follows. Negatively regulates transcription of bacterial ribonucleotide reductase nrd genes and operons by binding to NrdR-boxes. The protein is Transcriptional repressor NrdR of Herpetosiphon aurantiacus (strain ATCC 23779 / DSM 785 / 114-95).